A 292-amino-acid chain; its full sequence is 11-beta-hydroxysteroid dehydrogenase 1 (292 aa).

Residues 2–7 (HFMKKY) are Cytoplasmic-facing. The chain crosses the membrane as a helical; Signal-anchor for type II membrane protein span at residues 8–24 (LLPILVLFLAYYYYSTK). At 25-292 (EEFRPEMLQG…SFTFDKLISS (268 aa)) the chain is on the lumenal side. Residues 41-67 (GASK…TARS), 92-93 (TM), and 119-121 (NHI) each bind NADP(+). Residue asparagine 162 is glycosylated (N-linked (GlcNAc...) asparagine). Position 170 (serine 170) interacts with substrate. Tyrosine 183 (proton acceptor) is an active-site residue. 183-187 (YSASK) is an NADP(+) binding site. Asparagine 207 carries N-linked (GlcNAc...) asparagine glycosylation. Position 218–222 (218–222 (INTET)) interacts with NADP(+).

It belongs to the short-chain dehydrogenases/reductases (SDR) family. Homodimer. In terms of tissue distribution, detected in adrenal gland, liver, kidney, testis, and at lower levels in brain and lung (at protein level).

Its subcellular location is the endoplasmic reticulum membrane. It catalyses the reaction an 11beta-hydroxysteroid + NADP(+) = an 11-oxosteroid + NADPH + H(+). The catalysed reaction is corticosterone + NADP(+) = 11-dehydrocorticosterone + NADPH + H(+). It carries out the reaction a 7beta-hydroxysteroid + NADP(+) = a 7-oxosteroid + NADPH + H(+). The enzyme catalyses 7-oxocholesterol + NADPH + H(+) = 7beta-hydroxycholesterol + NADP(+). It catalyses the reaction 7-oxocholesterol + NADPH + H(+) = 7alpha-hydroxycholesterol + NADP(+). The catalysed reaction is chenodeoxycholate + NADP(+) = 7-oxolithocholate + NADPH + H(+). It carries out the reaction 7-oxolithocholate + NADPH + H(+) = ursodeoxycholate + NADP(+). The enzyme catalyses glycochenodeoxycholate + NADP(+) = 7-oxoglycolithocholate + NADPH + H(+). It catalyses the reaction taurochenodeoxycholate + NADP(+) = 7-oxotaurolithocholate + NADPH + H(+). The catalysed reaction is tauroursodeoxycholate + NADP(+) = 7-oxotaurolithocholate + NADPH + H(+). It carries out the reaction glycoursodeoxycholate + NADP(+) = 7-oxoglycolithocholate + NADPH + H(+). The enzyme catalyses 7-oxopregnenolone + NADPH + H(+) = 7beta-hydroxypregnenolone + NADP(+). It catalyses the reaction 3beta,7alpha-dihydroxyandrost-5-en-17-one + NADP(+) = 3beta-hydroxy-5-androstene-7,17-dione + NADPH + H(+). The catalysed reaction is 3beta-hydroxy-5-androstene-7,17-dione + NADPH + H(+) = 3beta,7beta-dihydroxyandrost-5-en-17-one + NADP(+). It carries out the reaction 3beta-hydroxy-5alpha-androstane-7,17-dione + NADPH + H(+) = 3beta,7beta-dihydroxy-5alpha-androstan-17-one + NADP(+). It functions in the pathway steroid metabolism. Functionally, controls the reversible conversion of biologically active glucocorticoids such as 11-dehydrocorticosterone to corticosterone in the presence of NADP(H). Participates in the corticosteroid receptor-mediated anti-inflammatory response, as well as metabolic and homeostatic processes. Bidirectional in vitro, predominantly functions as a reductase in vivo, thereby increasing the concentration of active glucocorticoids. It has broad substrate specificity, besides glucocorticoids, it accepts other steroid and sterol substrates. Interconverts 7-oxo- and 7-hydroxy-neurosteroids such as 7-oxopregnenolone and 7beta-hydroxypregnenolone, 7-oxodehydroepiandrosterone (3beta-hydroxy-5-androstene-7,17-dione) and 7beta-hydroxydehydroepiandrosterone (3beta,7beta-dihydroxyandrost-5-en-17-one), among others. Catalyzes reversibly the conversion of the major dietary oxysterol, 7-ketocholesterol (7-oxocholesterol), into the more polar 7-beta-hydroxycholesterol and 7-alpha-hhydroxycholesterol metabolites. 7-oxocholesterol is one of the most important oxysterols, it participates in several events such as induction of apoptosis, accumulation in atherosclerotic lesions, lipid peroxidation, and induction of foam cell formation. Mediates the 7-oxo reduction of 7-oxolithocholate mainly to chenodeoxycholate, and to a lesser extent to ursodeoxycholate, both in its free form and when conjugated to glycine or taurine, providing a link between glucocorticoid activation and bile acid metabolism. Catalyzes the synthesis of 7-beta-25-dihydroxycholesterol from 7-oxo-25-hydroxycholesterol in vitro, which acts as a ligand for the G-protein-coupled receptor (GPCR) Epstein-Barr virus-induced gene 2 (EBI2) and may thereby regulate immune cell migration. The sequence is that of 11-beta-hydroxysteroid dehydrogenase 1 (HSD11B1) from Mesocricetus auratus (Golden hamster).